The sequence spans 122 residues: Large ribosomal subunit protein uL14 (122 aa).

This sequence belongs to the universal ribosomal protein uL14 family. Part of the 50S ribosomal subunit. Forms a cluster with proteins L3 and L19. In the 70S ribosome, L14 and L19 interact and together make contacts with the 16S rRNA in bridges B5 and B8.

Binds to 23S rRNA. Forms part of two intersubunit bridges in the 70S ribosome. This is Large ribosomal subunit protein uL14 from Ectopseudomonas mendocina (strain ymp) (Pseudomonas mendocina).